We begin with the raw amino-acid sequence, 480 residues long: Cytochrome c oxidase subunit 1 (480 aa).

The chain crosses the membrane as a helical span at residues 22 to 42; sequence ISYLWLAYWFGMIGFYMSVLI. Ca(2+)-binding residues include glutamate 45 and glycine 50. The next 8 membrane-spanning stretches (helical) occupy residues 64–84, 109–129, 151–171, 194–214, 240–260, 278–298, 309–329, and 343–363; these read LLFTLHGLIMVFFNIMTGLFG, SLLLQPIGFVLVVSSVYLEIG, LIIFGLLAAGIASTLSSINFI, IVLTSFLLLLSLPVVTAVFLM, LFWFFGHPEVYIMILPGFGII, MILAMGSIALLGCLVWGHHMY, YFTTVTILIALPTGNKIFNWV, and LILFAVLFIVNFVIGGTTGVV. Histidine 69 is a Fe(II)-heme a binding site. Histidine 246 is a binding site for Cu cation. Residues 246–250 constitute a cross-link (1'-histidyl-3'-tyrosine (His-Tyr)); sequence HPEVY. Residue tyrosine 250 coordinates O2. Cu cation contacts are provided by histidine 295 and histidine 296. Mg(2+) contacts are provided by histidine 374 and aspartate 375. Histidine 382 provides a ligand contact to heme a3. 2 helical membrane passes run 382-402 and 416-436; these read HFHFVLSIGAIISLICFIVYI and LSLMAPIFMIAVLFTFLPMHF. Histidine 384 contacts Fe(II)-heme a. A Ca(2+)-binding site is contributed by proline 447. Residues 458–478 traverse the membrane as a helical segment; that stretch reads FICTLGATMMLVLKLTVLFII.

Belongs to the heme-copper respiratory oxidase family. In terms of assembly, component of the cytochrome c oxidase (complex IV, CIV), a multisubunit enzyme composed of a catalytic core of 3 subunits and several supernumerary subunits. The complex exists as a monomer or a dimer and forms supercomplexes (SCs) in the inner mitochondrial membrane with ubiquinol-cytochrome c oxidoreductase (cytochrome b-c1 complex, complex III, CIII). Heme serves as cofactor. The cofactor is Cu cation.

It localises to the mitochondrion inner membrane. It carries out the reaction 4 Fe(II)-[cytochrome c] + O2 + 8 H(+)(in) = 4 Fe(III)-[cytochrome c] + 2 H2O + 4 H(+)(out). It participates in energy metabolism; oxidative phosphorylation. Functionally, component of the cytochrome c oxidase, the last enzyme in the mitochondrial electron transport chain which drives oxidative phosphorylation. The respiratory chain contains 3 multisubunit complexes succinate dehydrogenase (complex II, CII), ubiquinol-cytochrome c oxidoreductase (cytochrome b-c1 complex, complex III, CIII) and cytochrome c oxidase (complex IV, CIV), that cooperate to transfer electrons derived from NADH and succinate to molecular oxygen, creating an electrochemical gradient over the inner membrane that drives transmembrane transport and the ATP synthase. Cytochrome c oxidase is the component of the respiratory chain that catalyzes the reduction of oxygen to water. Electrons originating from reduced cytochrome c in the intermembrane space (IMS) are transferred via the dinuclear copper A center (CU(A)) of subunit 2 and heme A of subunit 1 to the active site in subunit 1, a binuclear center (BNC) formed by heme A3 and copper B (CU(B)). The BNC reduces molecular oxygen to 2 water molecules using 4 electrons from cytochrome c in the IMS and 4 protons from the mitochondrial matrix. The sequence is that of Cytochrome c oxidase subunit 1 (MT-CO1) from Theileria annulata.